Consider the following 276-residue polypeptide: Rhomboid protease GlpG (276 aa).

Transmembrane regions (helical) follow at residues 94–114, 142–162, 169–189, 192–212, 229–249, and 250–270; these read GPVT…MQIL, ALMH…WYLG, LGSG…GYVQ, FSGP…GYVW, LIIF…GMSM, and ANGA…VDSL. The Nucleophile role is filled by Ser-201. The active site involves His-254.

This sequence belongs to the peptidase S54 family.

It localises to the cell inner membrane. The enzyme catalyses Cleaves type-1 transmembrane domains using a catalytic dyad composed of serine and histidine that are contributed by different transmembrane domains.. In terms of biological role, rhomboid-type serine protease that catalyzes intramembrane proteolysis. The polypeptide is Rhomboid protease GlpG (Escherichia fergusonii (strain ATCC 35469 / DSM 13698 / CCUG 18766 / IAM 14443 / JCM 21226 / LMG 7866 / NBRC 102419 / NCTC 12128 / CDC 0568-73)).